A 307-amino-acid chain; its full sequence is MVLPFTLQQLRIFKAIASEKSFTQAAEILFVSQPSLSKQIKTLENRLGILLLNRTGNKILLTEAGVVFLQYSERILALCEESCRALNDLKDGERGNLKVGASQTIGAYLMPRVLTLFAQSYPQINLHIDIDSTRIIAKKVADRSLDIAVVGGDIPTGLKKNLEIEDFVEDELILIISKSHPFAKKKKKKISKEDLYHLNFITLNSNSTIHKFINNILIQNNIQTAQFNVIMELNSIEAIKTAVSLGLGAAFVSSSAIEKELELKTVEIITIENIRITRTLSIITNPDSHRSKAFDFFYNELWLLKNL.

Residues 5–62 (FTLQQLRIFKAIASEKSFTQAAEILFVSQPSLSKQIKTLENRLGILLLNRTGNKILLT) form the HTH lysR-type domain. Residues 22–41 (FTQAAEILFVSQPSLSKQIK) constitute a DNA-binding region (H-T-H motif).

The protein belongs to the LysR transcriptional regulatory family.

It localises to the plastid. The protein localises to the chloroplast. Trans-acting transcriptional regulator of RuBisCO genes (rbcL and rbcS) expression. The chain is Probable RuBisCO transcriptional regulator (rbcR-A) from Thalassiosira pseudonana (Marine diatom).